Here is a 275-residue protein sequence, read N- to C-terminus: Protein FAM210A (275 aa).

Residues 68 to 108 (SSQPADTPRKVPEEREPLTSATEVPKQSPVESDASDPDPLQ) are disordered. Over residues 74-84 (TPRKVPEEREP) the composition is skewed to basic and acidic residues. The 113-residue stretch at 109-221 (DKSISLVQRF…GYMSTPPPVK (113 aa)) folds into the DUF1279 domain. A helical membrane pass occupies residues 128–148 (VMIPVHLVTSTVWFGSFYYAA). A coiled-coil region spans residues 221 to 271 (KEYLQDRMEETKDKITEKMEETKDKITEKMEETKDKITEKIQETKDKVSFK).

Belongs to the FAM210 family. As to quaternary structure, interacts with ATAD3A.

Its subcellular location is the membrane. It is found in the mitochondrion. The protein localises to the cytoplasm. Functionally, may play a role in the structure and strength of both muscle and bone. The sequence is that of Protein FAM210A (FAM210A) from Gallus gallus (Chicken).